We begin with the raw amino-acid sequence, 21 residues long: DINGGGATLPQKLYQTSGVLT.

The protein belongs to the cutinase family.

It localises to the secreted. The enzyme catalyses cutin + H2O = cutin monomers.. Its activity is regulated as follows. Inhibited by diisopropyl fluorophosphate (DFP). In terms of biological role, catalyzes the hydrolysis of complex carboxylic polyesters found in the cell wall of plants. Degrades cutin, a macromolecule that forms the structure of the plant cuticle. Allows pathogenic fungi to penetrate through the cuticular barrier into the host plant during the initial stage of fungal infection. This is Cutinase 2 from Colletotrichum gloeosporioides (Anthracnose fungus).